A 470-amino-acid polypeptide reads, in one-letter code: MTRYQHLATLLAERIEQGLYRHGEKLPSVRSLSQEHGVSISTVQQAYQTLETMKLITPQPRSGYFVAQRKAQPPVPPMTRPVQRPVEITQWDQVLDMLEAHSDSSIVPLSKSTPDVEAPSLKPLWRELSRVVQHNLQTVLGYDLLAGQRVLREQIARLMLDSGSVVTADDIIITSGCHNSMSLALMAVCKPGDIVAVESPCYYGSMQMLRGMGVKVIEIPTDPETGISVEALELALEQWPIKGIILVPNCNNPLGFIMPDARKRAVLSLAQRHDIVIFEDDVYGELATEYPRPRTIHSWDIDGRVLLCSSFSKSIAPGLRVGWVAPGRYHDKLMHMKYAISSFNVPSTQMAAATFVLEGHYHRHIRRMRQIYQRNLALYTCWIREYFPCEICITRPKGGFLLWIELPEQVDMVCVARQLCRMKIQVAAGSIFSASGKYRNCLRINCALPLSETYREALKQIGEAVYRAME.

The HTH gntR-type domain maps to 1-69 (MTRYQHLATL…PRSGYFVAQR (69 aa)). Lys313 bears the N6-(pyridoxal phosphate)lysine mark.

It in the C-terminal section; belongs to the class-I pyridoxal-phosphate-dependent aminotransferase family.

This is an uncharacterized protein from Escherichia coli (strain K12).